Consider the following 461-residue polypeptide: LL-diaminopimelate aminotransferase, chloroplastic (461 aa).

The transit peptide at 1 to 45 directs the protein to the chloroplast; the sequence is MSSTHQLVSSMISSSSSTFLAPSNFNLRTRNACLPMAKRVNTCKC. Residues Tyr72 and Gly99 each coordinate substrate. Pyridoxal 5'-phosphate-binding positions include Tyr129, 163–164, Tyr187, Asn244, Tyr275, and 302–304; these read AK and SFS. Residues Lys164, Tyr187, and Asn244 each contribute to the substrate site. Position 305 is an N6-(pyridoxal phosphate)lysine (Lys305). Pyridoxal 5'-phosphate is bound by residues Arg313 and Asn344. Substrate is bound by residues Asn344 and Arg439.

It belongs to the class-I pyridoxal-phosphate-dependent aminotransferase family. LL-diaminopimelate aminotransferase subfamily. As to quaternary structure, homodimer. The cofactor is pyridoxal 5'-phosphate. Highly expressed in seedlings, roots, stems, flowers and leaves. Lower expression in siliques.

Its subcellular location is the plastid. It localises to the chloroplast. The catalysed reaction is (2S,6S)-2,6-diaminopimelate + 2-oxoglutarate = (S)-2,3,4,5-tetrahydrodipicolinate + L-glutamate + H2O + H(+). It participates in amino-acid biosynthesis; L-lysine biosynthesis via DAP pathway; LL-2,6-diaminopimelate from (S)-tetrahydrodipicolinate (aminotransferase route): step 1/1. Required for lysine biosynthesis. Catalyzes the direct conversion of tetrahydrodipicolinate to LL-diaminopimelate, a reaction that requires three enzymes in E.coli. Not active with meso-diaminopimelate, lysine or ornithine as substrates. The chain is LL-diaminopimelate aminotransferase, chloroplastic (DAP) from Arabidopsis thaliana (Mouse-ear cress).